Consider the following 680-residue polypeptide: DNA-directed RNA polymerase subunit beta' (680 aa).

Residues C69, C71, C87, and C90 each contribute to the Zn(2+) site. Mg(2+) contacts are provided by D489, D491, and D493.

Belongs to the RNA polymerase beta' chain family. RpoC1 subfamily. As to quaternary structure, in plastids the minimal PEP RNA polymerase catalytic core is composed of four subunits: alpha, beta, beta', and beta''. When a (nuclear-encoded) sigma factor is associated with the core the holoenzyme is formed, which can initiate transcription. The cofactor is Mg(2+). Zn(2+) is required as a cofactor.

Its subcellular location is the plastid. It localises to the chloroplast. It catalyses the reaction RNA(n) + a ribonucleoside 5'-triphosphate = RNA(n+1) + diphosphate. Its function is as follows. DNA-dependent RNA polymerase catalyzes the transcription of DNA into RNA using the four ribonucleoside triphosphates as substrates. The protein is DNA-directed RNA polymerase subunit beta' of Barbarea verna (Land cress).